We begin with the raw amino-acid sequence, 601 residues long: Elongation factor 4 (601 aa).

The 183-residue stretch at 7–189 (DNIRNFSIVA…AIVKRLPAPK (183 aa)) folds into the tr-type G domain. GTP is bound by residues 19-24 (DHGKST) and 136-139 (NKVD).

This sequence belongs to the TRAFAC class translation factor GTPase superfamily. Classic translation factor GTPase family. LepA subfamily.

Its subcellular location is the cell inner membrane. The enzyme catalyses GTP + H2O = GDP + phosphate + H(+). In terms of biological role, required for accurate and efficient protein synthesis under certain stress conditions. May act as a fidelity factor of the translation reaction, by catalyzing a one-codon backward translocation of tRNAs on improperly translocated ribosomes. Back-translocation proceeds from a post-translocation (POST) complex to a pre-translocation (PRE) complex, thus giving elongation factor G a second chance to translocate the tRNAs correctly. Binds to ribosomes in a GTP-dependent manner. In Methylorubrum extorquens (strain CM4 / NCIMB 13688) (Methylobacterium extorquens), this protein is Elongation factor 4.